The primary structure comprises 364 residues: Phosphoserine aminotransferase (364 aa).

Arg42 contributes to the L-glutamate binding site. Pyridoxal 5'-phosphate is bound by residues 76–77 (AS), Trp100, Thr150, Asp169, and Gln192. N6-(pyridoxal phosphate)lysine is present on Lys193. Position 234–235 (234–235 (NT)) interacts with pyridoxal 5'-phosphate.

Belongs to the class-V pyridoxal-phosphate-dependent aminotransferase family. SerC subfamily. In terms of assembly, homodimer. Pyridoxal 5'-phosphate serves as cofactor.

Its subcellular location is the cytoplasm. The catalysed reaction is O-phospho-L-serine + 2-oxoglutarate = 3-phosphooxypyruvate + L-glutamate. The enzyme catalyses 4-(phosphooxy)-L-threonine + 2-oxoglutarate = (R)-3-hydroxy-2-oxo-4-phosphooxybutanoate + L-glutamate. Its pathway is amino-acid biosynthesis; L-serine biosynthesis; L-serine from 3-phospho-D-glycerate: step 2/3. Functionally, catalyzes the reversible conversion of 3-phosphohydroxypyruvate to phosphoserine and of 3-hydroxy-2-oxo-4-phosphonooxybutanoate to phosphohydroxythreonine. This is Phosphoserine aminotransferase from Shouchella clausii (strain KSM-K16) (Alkalihalobacillus clausii).